The sequence spans 380 residues: Glycogenin-2 (380 aa).

Positions 10, 16, and 95 each coordinate UDP. The UDP-alpha-D-glucose site is built by leucine 10, tyrosine 16, arginine 95, lysine 104, aspartate 120, alanine 121, aspartate 122, asparagine 158, threonine 159, aspartate 185, aspartate 188, and glutamine 189. Positions 120, 121, and 122 each coordinate UDP. Residue aspartate 120 participates in Mn(2+) binding. Aspartate 122 contacts Mn(2+). Tyrosine 230 and tyrosine 232 each carry an O-linked (Glc...) tyrosine glycan. Residues histidine 249, glycine 252, and lysine 255 each contribute to the UDP site. Position 249 (histidine 249) interacts with Mn(2+). Glycine 252 and lysine 255 together coordinate UDP-alpha-D-glucose. Positions 331 to 355 (SVDRNASQKSTAEKHDIEKPTSKPQ) are disordered. Residues 341-351 (TAEKHDIEKPT) are compositionally biased toward basic and acidic residues. Tyrosine 367 is a glycosylation site (O-linked (Glc...) tyrosine).

It belongs to the glycosyltransferase 8 family. Glycogenin subfamily. In terms of assembly, interacts with glycogen synthase GSY2. Requires Mn(2+) as cofactor.

The protein resides in the cytoplasm. It is found in the vacuole. The catalysed reaction is L-tyrosyl-[glycogenin] + UDP-alpha-D-glucose = alpha-D-glucosyl-L-tyrosyl-[glycogenin] + UDP + H(+). It carries out the reaction [1,4-alpha-D-glucosyl](n)-L-tyrosyl-[glycogenin] + UDP-alpha-D-glucose = [1,4-alpha-D-glucosyl](n+1)-L-tyrosyl-[glycogenin] + UDP + H(+). Functionally, self-glucosylating initiator of glycogen synthesis. It catalyzes the formation of a short alpha (1,4)-glucosyl chain covalently attached via a glucose 1-O-tyrosyl linkage to internal tyrosine residues and these chains act as primers for the elongation reaction catalyzed by glycogen synthase. Capable of transferring glucosyl residues to unbound acceptors such as free oligoglucans or oligoglucan derivatives. The protein is Glycogenin-2 of Saccharomyces cerevisiae (strain ATCC 204508 / S288c) (Baker's yeast).